The primary structure comprises 566 residues: Protein downstream neighbor of Son (566 aa).

The interval 1–110 is disordered; the sequence is MALSVPGYSP…QPEAPVPFLD (110 aa). Phosphoserine occurs at positions 28 and 34. The span at 62 to 72 shows a compositional bias: gly residues; sequence GGRGGGSGGGP. The segment covering 73–82 has biased composition (low complexity); the sequence is AAARRNPFAR.

The protein belongs to the DONSON family. As to quaternary structure, component of the replisome complex composed of at least DONSON, MCM2, MCM7, PCNA and TICRR; interaction at least with PCNA occurs during DNA replication. In terms of tissue distribution, expressed in the brain, with higher levels in prenatal compared to adult brain.

The protein resides in the nucleus. Its function is as follows. Replisome component that maintains genome stability by protecting stalled or damaged replication forks. After the induction of replication stress, required for the stabilization of stalled replication forks, the efficient activation of the intra-S-phase and G/2M cell-cycle checkpoints and the maintenance of genome stability. This Homo sapiens (Human) protein is Protein downstream neighbor of Son (DONSON).